Reading from the N-terminus, the 256-residue chain is Small ribosomal subunit protein eS1 (256 aa).

The residue at position 2 (A2) is an N-acetylalanine; partial.

Belongs to the eukaryotic ribosomal protein eS1 family. As to quaternary structure, component of the small ribosomal subunit. Mature ribosomes consist of a small (40S) and a large (60S) subunit. The 40S subunit contains about 33 different proteins and 1 molecule of RNA (18S). The 60S subunit contains about 49 different proteins and 3 molecules of RNA (25S, 5.8S and 5S).

The protein localises to the cytoplasm. The sequence is that of Small ribosomal subunit protein eS1 from Coprinopsis cinerea (strain Okayama-7 / 130 / ATCC MYA-4618 / FGSC 9003) (Inky cap fungus).